The primary structure comprises 433 residues: MRVLVLGSGVIGTTSAYYLARAGFQVTVVDRQPAAAMETSFANAGQVSPGYASPWAAPGVPLKALKWLLQRHAPLAIKATADIDQYLWMAQMLRNCTASRYAINKERMVRLSEYSRDCLDELRLETGIAYEGRSLGTTQLFRTQAQLDNAAKDIAVLEQSGVPYELLDRDGIARVEPALAGVTGILSGALRLPNDQTGDCQLFTTRLAEMAVALGVEFRYGQNIERLDHAGDRINGVWIDGKLETADRYVLALGSYSPQLLKPLGIKAPVYPLKGYSLTVPITNPDMAPTSTILDETYKVAITRFDNRIRVGGMAEIAGFDLSLNPRRRETLEMIVGDLYPQGGDLTQADFWTGLRPTTPDGTPIVGATPFRNLFLNTGHGTLGWTMACGSGRLLADLIARKTPRISAEGLDISRYGNTQENAQHVHPAPAHQ.

Residue 3 to 17 (VLVLGSGVIGTTSAY) coordinates FAD.

This sequence belongs to the DadA oxidoreductase family. The cofactor is FAD.

It catalyses the reaction a D-alpha-amino acid + A + H2O = a 2-oxocarboxylate + AH2 + NH4(+). Its pathway is amino-acid degradation; D-alanine degradation; NH(3) and pyruvate from D-alanine: step 1/1. Functionally, oxidative deamination of D-amino acids. This Pseudomonas syringae pv. syringae (strain B728a) protein is D-amino acid dehydrogenase.